The sequence spans 148 residues: Transcription antitermination protein NusB (148 aa).

The protein belongs to the NusB family.

Involved in transcription antitermination. Required for transcription of ribosomal RNA (rRNA) genes. Binds specifically to the boxA antiterminator sequence of the ribosomal RNA (rrn) operons. The protein is Transcription antitermination protein NusB of Desulfitobacterium hafniense (strain DSM 10664 / DCB-2).